Consider the following 753-residue polypeptide: 5-methyltetrahydropteroyltriglutamate--homocysteine methyltransferase (753 aa).

Residues 17-20 and Lys-117 each bind 5-methyltetrahydropteroyltri-L-glutamate; that span reads RELK. L-homocysteine contacts are provided by residues 431–433 and Glu-484; that span reads IGS. Residues 431-433 and Glu-484 each bind L-methionine; that span reads IGS. 5-methyltetrahydropteroyltri-L-glutamate is bound by residues 515–516 and Trp-561; that span reads RC. Asp-599 is an L-homocysteine binding site. Asp-599 provides a ligand contact to L-methionine. Residue Glu-605 coordinates 5-methyltetrahydropteroyltri-L-glutamate. The Zn(2+) site is built by His-641, Cys-643, and Glu-665. The active-site Proton donor is His-694. Cys-726 contacts Zn(2+).

Belongs to the vitamin-B12 independent methionine synthase family. Zn(2+) is required as a cofactor.

It carries out the reaction 5-methyltetrahydropteroyltri-L-glutamate + L-homocysteine = tetrahydropteroyltri-L-glutamate + L-methionine. It participates in amino-acid biosynthesis; L-methionine biosynthesis via de novo pathway; L-methionine from L-homocysteine (MetE route): step 1/1. In terms of biological role, catalyzes the transfer of a methyl group from 5-methyltetrahydrofolate to homocysteine resulting in methionine formation. The protein is 5-methyltetrahydropteroyltriglutamate--homocysteine methyltransferase of Escherichia coli (strain ATCC 8739 / DSM 1576 / NBRC 3972 / NCIMB 8545 / WDCM 00012 / Crooks).